Consider the following 197-residue polypeptide: Adenylate kinase (197 aa).

7 to 15 (ALPGSGKTT) serves as a coordination point for ATP.

It belongs to the archaeal adenylate kinase family.

The protein localises to the cytoplasm. The catalysed reaction is AMP + ATP = 2 ADP. This chain is Adenylate kinase (adkA), found in Pyrobaculum aerophilum (strain ATCC 51768 / DSM 7523 / JCM 9630 / CIP 104966 / NBRC 100827 / IM2).